A 112-amino-acid polypeptide reads, in one-letter code: Nitrogen regulatory protein GlnK2 (112 aa).

ADP is bound by residues threonine 29, 37-39 (GVQ), valine 64, and 87-90 (GDGK). Residues threonine 29, 37–39 (GVQ), valine 64, and 87–90 (GDGK) each bind ATP.

The protein belongs to the P(II) protein family. As to quaternary structure, homotrimer. Interacts and forms a complex with Amt2.

The protein resides in the cytoplasm. Involved in the regulation of nitrogen metabolism. Regulates the activity of its targets by protein-protein interaction in response to the nitrogen status of the cell. Regulates the activity of the ammonia channel Amt2 via direct interaction. In Methanocaldococcus jannaschii (strain ATCC 43067 / DSM 2661 / JAL-1 / JCM 10045 / NBRC 100440) (Methanococcus jannaschii), this protein is Nitrogen regulatory protein GlnK2.